The sequence spans 391 residues: tRNA (cytosine(38)-C(5))-methyltransferase (391 aa).

Positions Leu4–Glu391 constitute an SAM-dependent MTase C5-type domain. Residues Ile13 to Gly15, Asp34, Ile57 to Glu58, and Ser76 contribute to the S-adenosyl-L-methionine site. The active site involves Cys79. Ser376 lines the S-adenosyl-L-methionine pocket.

The protein belongs to the class I-like SAM-binding methyltransferase superfamily. C5-methyltransferase family.

Its subcellular location is the cytoplasm. The catalysed reaction is cytidine(38) in tRNA + S-adenosyl-L-methionine = 5-methylcytidine(38) in tRNA + S-adenosyl-L-homocysteine + H(+). Specifically methylates cytosine 38 in the anticodon loop of tRNA(Asp). Has higher activity on tRNA(Asp) modified with queuosine at position 34. The sequence is that of tRNA (cytosine(38)-C(5))-methyltransferase (Trdmt1) from Rattus norvegicus (Rat).